A 33-amino-acid chain; its full sequence is DELTA-pseudomyrmecitoxin-Pp1a subunit B (33 aa).

As to quaternary structure, heterodimer composed of subunit A and subunit B (DELTA-PSDTX-Pp1a); disulfide-linked. Expressed by the venom gland.

It localises to the secreted. In terms of biological role, this heterodimer has insecticidal and cytotoxic properties. Induces immediate paralysis when injected into blowflies (Lucilia cuprina), and then death within 24 hours. Also inhibits the growth of Aedes albopictus mosquito C6/36 cells. In Pseudomyrmex penetrator (Ant), this protein is DELTA-pseudomyrmecitoxin-Pp1a subunit B.